Consider the following 426-residue polypeptide: G2/mitotic-specific cyclin-A (426 aa).

The segment covering 1 to 11 (MSMVHGSSFQI) has biased composition (polar residues). The segment at 1–22 (MSMVHGSSFQIAQDGENENQGV) is disordered.

Belongs to the cyclin family. Cyclin AB subfamily.

Its function is as follows. Essential for the control of the cell cycle at the G2/M (mitosis) transition. Interacts with the CDC2 and CDK2 protein kinases to form MPF. G2/M cyclins accumulate steadily during G2 and are abruptly destroyed at mitosis. The chain is G2/mitotic-specific cyclin-A from Patella vulgata (Common limpet).